Here is a 335-residue protein sequence, read N- to C-terminus: tRNA N6-adenosine threonylcarbamoyltransferase (335 aa).

Fe cation is bound by residues H110 and H114. Substrate is bound by residues 132–136, D165, G178, and N271; that span reads LVSGG. Residue D299 participates in Fe cation binding.

It belongs to the KAE1 / TsaD family. Fe(2+) serves as cofactor.

The protein localises to the cytoplasm. It catalyses the reaction L-threonylcarbamoyladenylate + adenosine(37) in tRNA = N(6)-L-threonylcarbamoyladenosine(37) in tRNA + AMP + H(+). Required for the formation of a threonylcarbamoyl group on adenosine at position 37 (t(6)A37) in tRNAs that read codons beginning with adenine. Is involved in the transfer of the threonylcarbamoyl moiety of threonylcarbamoyl-AMP (TC-AMP) to the N6 group of A37, together with TsaE and TsaB. TsaD likely plays a direct catalytic role in this reaction. In Campylobacter jejuni subsp. jejuni serotype O:23/36 (strain 81-176), this protein is tRNA N6-adenosine threonylcarbamoyltransferase.